The primary structure comprises 189 residues: Small ribosomal subunit protein uS7 (189 aa).

Belongs to the universal ribosomal protein uS7 family. As to quaternary structure, part of the 30S ribosomal subunit.

One of the primary rRNA binding proteins, it binds directly to 16S rRNA where it nucleates assembly of the head domain of the 30S subunit. Is located at the subunit interface close to the decoding center. The chain is Small ribosomal subunit protein uS7 from Methanosarcina mazei (strain ATCC BAA-159 / DSM 3647 / Goe1 / Go1 / JCM 11833 / OCM 88) (Methanosarcina frisia).